The primary structure comprises 188 residues: MGLLILGLGNPGLEFSLTRHNVGFSLLDKIVSKNGLFLKRKKKYEYSELKMISGRVILVKPLTYMNLSGSLFPSIFSDFYMCIKNLLVVLDNVDLPLGKCRLKERGGVSTHNGLRSISSVLGSSNYSRLYIGVGSNLMRDIKSFVLSRFCKDEMDRLEKLYDFLSDELIDISEANFKNKVQKINSSNF.

Phenylalanine 15 contacts tRNA. The Proton acceptor role is filled by histidine 20. The tRNA site is built by tyrosine 64, asparagine 66, and asparagine 112.

This sequence belongs to the PTH family. Monomer.

The protein resides in the cytoplasm. It carries out the reaction an N-acyl-L-alpha-aminoacyl-tRNA + H2O = an N-acyl-L-amino acid + a tRNA + H(+). Hydrolyzes ribosome-free peptidyl-tRNAs (with 1 or more amino acids incorporated), which drop off the ribosome during protein synthesis, or as a result of ribosome stalling. Its function is as follows. Catalyzes the release of premature peptidyl moieties from peptidyl-tRNA molecules trapped in stalled 50S ribosomal subunits, and thus maintains levels of free tRNAs and 50S ribosomes. This chain is Peptidyl-tRNA hydrolase, found in Borreliella burgdorferi (strain ATCC 35210 / DSM 4680 / CIP 102532 / B31) (Borrelia burgdorferi).